The following is a 137-amino-acid chain: MEKTLSIIKPDAVKKGVIGKILDRFESNGLRIAAMKKVQLSKEQAENFYAVHKERPFFKDLVEFMISGPVVVSILEGEGAVLKNRDLMGATNPKEAKAGTIRADFAESIDANAVHGSDSLENAKIEIEFFFKPNEIC.

ATP-binding residues include K9, F57, R85, T91, R102, and N112. H115 acts as the Pros-phosphohistidine intermediate in catalysis.

It belongs to the NDK family. As to quaternary structure, homotetramer. The cofactor is Mg(2+).

It is found in the cytoplasm. It carries out the reaction a 2'-deoxyribonucleoside 5'-diphosphate + ATP = a 2'-deoxyribonucleoside 5'-triphosphate + ADP. The enzyme catalyses a ribonucleoside 5'-diphosphate + ATP = a ribonucleoside 5'-triphosphate + ADP. Major role in the synthesis of nucleoside triphosphates other than ATP. The ATP gamma phosphate is transferred to the NDP beta phosphate via a ping-pong mechanism, using a phosphorylated active-site intermediate. This chain is Nucleoside diphosphate kinase, found in Campylobacter jejuni subsp. jejuni serotype O:2 (strain ATCC 700819 / NCTC 11168).